Reading from the N-terminus, the 419-residue chain is NFATC2-interacting protein (419 aa).

2 disordered regions span residues 1–131 and 151–215; these read MAEP…GKVK and DEEE…HTRA. The span at 11–27 shows a compositional bias: gly residues; sequence WSGGSGAGRGGRGGWGG. Low complexity predominate over residues 35–51; it reads QRSPSRGTLDVVSVDLV. Phosphoserine occurs at positions 54, 84, 88, 90, 92, and 127. Residues Lys-129 and Lys-131 each participate in a glycyl lysine isopeptide (Lys-Gly) (interchain with G-Cter in SUMO2) cross-link. A compositionally biased stretch (basic and acidic residues) spans 180–192; the sequence is RTKDKEEKKKTEF. 5 positions are modified to phosphoserine: Ser-198, Ser-201, Ser-204, Ser-220, and Ser-314. A coiled-coil region spans residues 209–231; sequence SRTHTRALKKLSEVNKRLQDLRS. 2 positions are modified to phosphothreonine: Thr-316 and Thr-318. The Ubiquitin-like domain occupies 348–419; sequence LQLRVQGKEK…ESGDLIEVWG (72 aa). 2 positions are modified to phosphoserine: Ser-369 and Ser-390.

As to quaternary structure, interacts with NFATC2, TRAF1, TRAF2 and PRMT1. Interacts with UBE2I/UBC9. Methylation at the N-terminus by PRMT1 modulates interaction with the NFAT complex and results in augmented cytokine production.

The protein localises to the nucleus. It localises to the cytoplasm. In terms of biological role, in T-helper 2 (Th2) cells, regulates the magnitude of NFAT-driven transcription of a specific subset of cytokine genes, including IL3, IL4, IL5 and IL13, but not IL2. Recruits PRMT1 to the IL4 promoter; this leads to enhancement of histone H4 'Arg-3'-methylation and facilitates subsequent histone acetylation at the IL4 locus, thus promotes robust cytokine expression. Down-regulates formation of poly-SUMO chains by UBE2I/UBC9. This Homo sapiens (Human) protein is NFATC2-interacting protein (NFATC2IP).